The primary structure comprises 1403 residues: Perilipin-4 (1403 aa).

Residues 1–21 (MSASGDGTRVPPKSKGKTLSS) are disordered. Residues S25 and S31 each carry the phosphoserine modification. The segment at 33–70 (RNLVSHTHSSTSTKDLQTATDPSGTPAPSSKVSTNSQM) is disordered. A run of 29 repeats spans residues 104-136 (GVFGIMDAAKGMVQGGLGATQSALVGTKEAVSG), 137-169 (GVMGAVGVAKGLVKGGLDTSKNVLTNTKDTVTT), 170-202 (GVMGAANMAKGTVQTGLDTTKSVVMGTKDTVAT), 203-235 (GLAGAVNVAKGTIQGGLDTTKSVVMGTKDTVTT), 236-268 (GLTGAVNVAKGVVQGGLDTTKSVVMGTKDTVTT), 269-301 (GLTGAMNVAKGTAQMGIDTSKTVLTGTKDTVCA), 302-334 (GATGAINVAKGAAQGGLDTTKSVLIGTKDTVTT), 335-367 (GLTGAVNVAKGAVQGGLDTTKSVVMGTKDTVTT), 368-400 (GLTGAMNVAKGTAQMGLGTSKTVLTGTKDTVCA), 401-433 (GLTGAINVAKGAAQGGLDTTKSVLMGTKDTVTT), 434-466 (GLTGAVNVAKGTIQGGLDTTKSVVMGTKDTVTT), 467-499 (GLTGAVNVAKGTIQGGLDTTKSVVMGTKDTVTT), 500-532 (GLTGAVNVAKGAAQGGLDTTKSVVMGTKDTVTT), 533-565 (GLTGAMNVAKGTAQMGLGTSKTVLTGTKDTVCA), 566-598 (GLTGAINVAKGAAQGGLDTTKSVLMGTKDTVTT), 599-631 (GLTGAVNVAKGTIQGGLDTTKSVVMGTKDTVTT), 632-664 (GLTGAVNVAKGAVQGGLDTTKSVVMGTKDTVTT), 665-697 (GLTGALNVAKGTAQMGIDTSKTVLIGTKDTVCA), 698-730 (GATGAINMAKGAAQGGLDTTKSVLMGTKDTVTT), 731-763 (GLTGAINVAKGSAQGGLDTTKSVLIGTKDTVTT), 764-796 (GLTGALNVAKGTVQTGLDTSQRVLTGTKDNVYA), 797-829 (GVTGAVNVAKGTIQGGLDTTKSVVMGTKDTVTT), 830-862 (GLTGAVNVAKGAVQGGLDTTKSVVMGTKDTVTT), 863-895 (GLTGAMNVAKGTAQMGIDTSKTVLTGTKDTVCA), 896-928 (GLTGAINVAKGATQGGLDTTKSVLMGTKDTVTT), 929-961 (GLTGAINVAKGAAQGGLDTTKSVLLGTKDTVTT), 962-994 (GLTGAANVAKETVQMGLDTSKNILMDTKDSICA), 995-1027 (GATGAITVVKGAAQGGLDTSNAALTGTMDTAKG), and 1028-1060 (TVQTSLDTSKHMLIGMKDTVCAGVTSAMNMAKG). Residues 104–1060 (GVFGIMDAAK…VTSAMNMAKG (957 aa)) form a 29 X 33 AA approximate tandem repeat region. Phosphoserine is present on S1281. Position 1287 is a phosphothreonine (T1287).

Belongs to the perilipin family. Specifically expressed in white adipose tissue and also weakly detected in heart and skeletal muscle (at protein level).

Its subcellular location is the cell membrane. It localises to the cytoplasm. The protein resides in the lipid droplet. In terms of biological role, may play a role in triacylglycerol packaging into adipocytes. May function as a coat protein involved in the biogenesis of lipid droplets. The protein is Perilipin-4 (Plin4) of Mus musculus (Mouse).